Consider the following 329-residue polypeptide: DNA-directed RNA polymerase subunit alpha (329 aa).

The alpha N-terminal domain (alpha-NTD) stretch occupies residues 1-235; sequence MLGSVTDFLK…EQLDAFVDLR (235 aa). The interval 249-329 is alpha C-terminal domain (alpha-CTD); it reads FDPILLRPVD…NWPPASLADN (81 aa).

This sequence belongs to the RNA polymerase alpha chain family. In terms of assembly, homodimer. The RNAP catalytic core consists of 2 alpha, 1 beta, 1 beta' and 1 omega subunit. When a sigma factor is associated with the core the holoenzyme is formed, which can initiate transcription.

The enzyme catalyses RNA(n) + a ribonucleoside 5'-triphosphate = RNA(n+1) + diphosphate. In terms of biological role, DNA-dependent RNA polymerase catalyzes the transcription of DNA into RNA using the four ribonucleoside triphosphates as substrates. The protein is DNA-directed RNA polymerase subunit alpha of Tolumonas auensis (strain DSM 9187 / NBRC 110442 / TA 4).